Consider the following 1342-residue polypeptide: DNA-directed RNA polymerase subunit beta (1342 aa).

The protein belongs to the RNA polymerase beta chain family. The RNAP catalytic core consists of 2 alpha, 1 beta, 1 beta' and 1 omega subunit. When a sigma factor is associated with the core the holoenzyme is formed, which can initiate transcription.

It catalyses the reaction RNA(n) + a ribonucleoside 5'-triphosphate = RNA(n+1) + diphosphate. DNA-dependent RNA polymerase catalyzes the transcription of DNA into RNA using the four ribonucleoside triphosphates as substrates. This chain is DNA-directed RNA polymerase subunit beta, found in Actinobacillus pleuropneumoniae serotype 5b (strain L20).